The chain runs to 386 residues: Putative 8-amino-7-oxononanoate synthase 2 (386 aa).

Arginine 21 contacts substrate. 104–105 (GY) provides a ligand contact to pyridoxal 5'-phosphate. Substrate is bound at residue histidine 129. Pyridoxal 5'-phosphate is bound by residues serine 176, 201 to 204 (DDAH), and 230 to 233 (TLSK). Residue lysine 233 is modified to N6-(pyridoxal phosphate)lysine.

It belongs to the class-II pyridoxal-phosphate-dependent aminotransferase family. BioF subfamily. Homodimer. Pyridoxal 5'-phosphate is required as a cofactor.

It carries out the reaction 6-carboxyhexanoyl-[ACP] + L-alanine + H(+) = (8S)-8-amino-7-oxononanoate + holo-[ACP] + CO2. It participates in cofactor biosynthesis; biotin biosynthesis. In terms of biological role, catalyzes the decarboxylative condensation of pimeloyl-[acyl-carrier protein] and L-alanine to produce 8-amino-7-oxononanoate (AON), [acyl-carrier protein], and carbon dioxide. This chain is Putative 8-amino-7-oxononanoate synthase 2 (bioF), found in Bacillus velezensis (strain DSM 23117 / BGSC 10A6 / LMG 26770 / FZB42) (Bacillus amyloliquefaciens subsp. plantarum).